The following is a 474-amino-acid chain: Ribosomal protein uS12 methylthiotransferase RimO (474 aa).

The MTTase N-terminal domain occupies 37–147 (NRIGFVSLGC…VLNHVHKYVP (111 aa)). Positions 46, 82, 111, 179, 183, and 186 each coordinate [4Fe-4S] cluster. The region spanning 165-402 (LTPKHYAYLK…MEVQAEISAE (238 aa)) is the Radical SAM core domain. The 67-residue stretch at 405-471 (ARLVGRELDI…EHDLWAELVA (67 aa)) folds into the TRAM domain.

This sequence belongs to the methylthiotransferase family. RimO subfamily. Requires [4Fe-4S] cluster as cofactor.

The protein localises to the cytoplasm. The enzyme catalyses L-aspartate(89)-[ribosomal protein uS12]-hydrogen + (sulfur carrier)-SH + AH2 + 2 S-adenosyl-L-methionine = 3-methylsulfanyl-L-aspartate(89)-[ribosomal protein uS12]-hydrogen + (sulfur carrier)-H + 5'-deoxyadenosine + L-methionine + A + S-adenosyl-L-homocysteine + 2 H(+). Its function is as follows. Catalyzes the methylthiolation of an aspartic acid residue of ribosomal protein uS12. This chain is Ribosomal protein uS12 methylthiotransferase RimO, found in Shewanella amazonensis (strain ATCC BAA-1098 / SB2B).